Reading from the N-terminus, the 73-residue chain is Conotoxin Cl14.8 (73 aa).

The first 19 residues, 1 to 19 (MKLSVTFIALMLTMTLTQG), serve as a signal peptide directing secretion. Positions 20–47 (FVLQAIDGRDNSGLDDLSEADSMEHQLQ) are excised as a propeptide.

It belongs to the conotoxin L superfamily. Post-translationally, contains 2 disulfide bonds. In terms of tissue distribution, expressed by the venom duct.

It is found in the secreted. In Californiconus californicus (California cone), this protein is Conotoxin Cl14.8.